A 227-amino-acid polypeptide reads, in one-letter code: Cytochrome c oxidase subunit 2 (227 aa).

Residues 1–14 (MAYPFQLGLQDATS) lie on the Mitochondrial intermembrane side of the membrane. Residues 15–45 (PIMEELLHFHDHTLMIVFLISSLVLYIISLM) form a helical membrane-spanning segment. The Mitochondrial matrix portion of the chain corresponds to 46–59 (LTTKLTHTSTMDAQ). A helical membrane pass occupies residues 60 to 87 (EVETVWTILPAIILILIALPSLRILYMM). Over 88–227 (DEINNPSLTV…YFETWSALMV (140 aa)) the chain is Mitochondrial intermembrane. Cu cation is bound by residues His161, Cys196, Glu198, Cys200, His204, and Met207. A Mg(2+)-binding site is contributed by Glu198. Tyr218 bears the Phosphotyrosine mark.

This sequence belongs to the cytochrome c oxidase subunit 2 family. Component of the cytochrome c oxidase (complex IV, CIV), a multisubunit enzyme composed of 14 subunits. The complex is composed of a catalytic core of 3 subunits MT-CO1, MT-CO2 and MT-CO3, encoded in the mitochondrial DNA, and 11 supernumerary subunits COX4I, COX5A, COX5B, COX6A, COX6B, COX6C, COX7A, COX7B, COX7C, COX8 and NDUFA4, which are encoded in the nuclear genome. The complex exists as a monomer or a dimer and forms supercomplexes (SCs) in the inner mitochondrial membrane with NADH-ubiquinone oxidoreductase (complex I, CI) and ubiquinol-cytochrome c oxidoreductase (cytochrome b-c1 complex, complex III, CIII), resulting in different assemblies (supercomplex SCI(1)III(2)IV(1) and megacomplex MCI(2)III(2)IV(2)). Found in a complex with TMEM177, COA6, COX18, COX20, SCO1 and SCO2. Interacts with TMEM177 in a COX20-dependent manner. Interacts with COX20. Interacts with COX16. Cu cation is required as a cofactor.

The protein localises to the mitochondrion inner membrane. It carries out the reaction 4 Fe(II)-[cytochrome c] + O2 + 8 H(+)(in) = 4 Fe(III)-[cytochrome c] + 2 H2O + 4 H(+)(out). In terms of biological role, component of the cytochrome c oxidase, the last enzyme in the mitochondrial electron transport chain which drives oxidative phosphorylation. The respiratory chain contains 3 multisubunit complexes succinate dehydrogenase (complex II, CII), ubiquinol-cytochrome c oxidoreductase (cytochrome b-c1 complex, complex III, CIII) and cytochrome c oxidase (complex IV, CIV), that cooperate to transfer electrons derived from NADH and succinate to molecular oxygen, creating an electrochemical gradient over the inner membrane that drives transmembrane transport and the ATP synthase. Cytochrome c oxidase is the component of the respiratory chain that catalyzes the reduction of oxygen to water. Electrons originating from reduced cytochrome c in the intermembrane space (IMS) are transferred via the dinuclear copper A center (CU(A)) of subunit 2 and heme A of subunit 1 to the active site in subunit 1, a binuclear center (BNC) formed by heme A3 and copper B (CU(B)). The BNC reduces molecular oxygen to 2 water molecules using 4 electrons from cytochrome c in the IMS and 4 protons from the mitochondrial matrix. In Canis adustus (Side-striped jackal), this protein is Cytochrome c oxidase subunit 2 (MT-CO2).